The chain runs to 119 residues: MVQENKNFATAQAKSIRVSSRKLNLVAAFIRNMKVSEALVQLTFSPKRIAKVVKDCLQSAVANAENNLGLDIDRLVITKATVGKALVMKRVMPRAKGRATRINKFFSNLYITVTEKEDN.

It belongs to the universal ribosomal protein uL22 family. Part of the 50S ribosomal subunit.

This protein binds specifically to 23S rRNA; its binding is stimulated by other ribosomal proteins, e.g. L4, L17, and L20. It is important during the early stages of 50S assembly. It makes multiple contacts with different domains of the 23S rRNA in the assembled 50S subunit and ribosome. Functionally, the globular domain of the protein is located near the polypeptide exit tunnel on the outside of the subunit, while an extended beta-hairpin is found that lines the wall of the exit tunnel in the center of the 70S ribosome. The chain is Large ribosomal subunit protein uL22 from Rickettsia rickettsii (strain Iowa).